Here is a 322-residue protein sequence, read N- to C-terminus: 5'-AMP-activated protein kinase subunit gamma (322 aa).

4 consecutive CBS domains span residues 37-97 (VSYR…NPDK), 118-181 (VDQL…CRET), 194-253 (ITQD…YNDL), and 262-322 (MRRS…LGSN). ADP-binding positions include isoleucine 42, arginine 146, 166–169 (TQYR), and threonine 195. Residues threonine 195, lysine 200, and 221–222 (SS) contribute to the AMP site. ATP-binding positions include threonine 195, lysine 200, and 221–222 (SS). ADP is bound by residues 221–222 (SS), 291–293 (RVH), and 309–312 (TLSD). AMP is bound at residue 309–312 (TLSD). 309-312 (TLSD) contributes to the ATP binding site.

It belongs to the 5'-AMP-activated protein kinase gamma subunit family. In terms of assembly, AMPK is a heterotrimer of an alpha catalytic subunit (SNF1), a beta (SIP1, SIP2 or GAL83) and a gamma non-catalytic subunits (SNF4). Note=Interaction between SNF1 and SNF4 is inhibited by high levels of glucose.

It is found in the nucleus. The protein resides in the cytoplasm. Its function is as follows. Adenine nucleotides-binding subunit gamma of AMP-activated protein kinase (AMPK), an energy sensor protein kinase that plays a key role in regulating cellular energy metabolism. In response to reduction of intracellular ATP levels, AMPK activates energy-producing pathways and inhibits energy-consuming processes: inhibits protein, carbohydrate and lipid biosynthesis, as well as cell growth and proliferation. AMPK acts via direct phosphorylation of metabolic enzymes, and by longer-term effects via phosphorylation of transcription regulators. Gamma non-catalytic subunit mediates binding to AMP, ADP and ATP, leading to activate or inhibit AMPK: AMP-binding results in allosteric activation of alpha catalytic subunit (SNF1) both by inducing phosphorylation and preventing dephosphorylation of catalytic subunits. This chain is 5'-AMP-activated protein kinase subunit gamma (SNF4), found in Saccharomyces cerevisiae (strain ATCC 204508 / S288c) (Baker's yeast).